The following is a 284-amino-acid chain: Acetylglutamate kinase (284 aa).

Residues 64–65 (GG), arginine 86, and asparagine 179 each bind substrate.

It belongs to the acetylglutamate kinase family. ArgB subfamily.

It is found in the cytoplasm. The catalysed reaction is N-acetyl-L-glutamate + ATP = N-acetyl-L-glutamyl 5-phosphate + ADP. It functions in the pathway amino-acid biosynthesis; L-arginine biosynthesis; N(2)-acetyl-L-ornithine from L-glutamate: step 2/4. Its function is as follows. Catalyzes the ATP-dependent phosphorylation of N-acetyl-L-glutamate. The polypeptide is Acetylglutamate kinase (Prochlorococcus marinus subsp. pastoris (strain CCMP1986 / NIES-2087 / MED4)).